Here is a 489-residue protein sequence, read N- to C-terminus: Glycogen synthase (489 aa).

Arg-20 is a binding site for ADP-alpha-D-glucose.

Belongs to the glycosyltransferase 1 family. Bacterial/plant glycogen synthase subfamily.

It catalyses the reaction [(1-&gt;4)-alpha-D-glucosyl](n) + ADP-alpha-D-glucose = [(1-&gt;4)-alpha-D-glucosyl](n+1) + ADP + H(+). It participates in glycan biosynthesis; glycogen biosynthesis. Its function is as follows. Synthesizes alpha-1,4-glucan chains using ADP-glucose. The polypeptide is Glycogen synthase (Pelodictyon phaeoclathratiforme (strain DSM 5477 / BU-1)).